The following is a 1108-amino-acid chain: cGMP-inhibited 3',5'-cyclic phosphodiesterase 3B (1108 aa).

The segment covering 1–11 (MRKDERERDTP) has biased composition (basic and acidic residues). Positions 1–32 (MRKDERERDTPAMRSPPPPPPPATATAASPPE) are disordered. The interval 1-32 (MRKDERERDTPAMRSPPPPPPPATATAASPPE) is interaction with RAPGEF3. Positions 14 to 23 (RSPPPPPPPA) are enriched in pro residues. Position 15 is a phosphoserine (Ser15). 6 consecutive transmembrane segments (helical) span residues 73-93 (AGAR…LLGA), 114-134 (LSLS…CFLT), 144-164 (AGSW…FAAW), 175-195 (AAAA…LTLA), 204-224 (VLVL…LGAL), and 231-251 (LLSC…DHFF). At Ser279 the chain carries Phosphoserine; by PKB/AKT1 or PKB/AKT2. 2 positions are modified to phosphoserine: Ser280 and Ser427. Positions 405 to 448 (DRKLHKGLSSKPSFPTAQLRRSSGASGLLTSEHHSRWDRSGGKR) are disordered. Residues 414–433 (SKPSFPTAQLRRSSGASGLL) are compositionally biased toward polar residues. An interaction with PIK3R6 region spans residues 421 to 445 (AQLRRSSGASGLLTSEHHSRWDRSG). The segment covering 435-445 (SEHHSRWDRSG) has biased composition (basic and acidic residues). One can recognise a PDEase domain in the interval 633 to 1070 (PNIDQEVLLD…KIWKEIIEEE (438 aa)). The active-site Proton donor is His719. His719 provides a ligand contact to AMP. His723, His803, Asp804, and Asp919 together coordinate Mg(2+). Asp804, Asp919, and Gln970 together coordinate AMP. A compositionally biased stretch (acidic residues) spans 999-1033 (EEGDDTESDDDDDDDDDDDDDDDEELDSDDEETED). The disordered stretch occupies residues 999-1042 (EEGDDTESDDDDDDDDDDDDDDDEELDSDDEETEDNLNPKPQRR).

This sequence belongs to the cyclic nucleotide phosphodiesterase family. PDE3 subfamily. In terms of assembly, homodimer. Interacts with PIK3CG; regulates PDE3B activity and thereby cAMP levels in cells. Interacts with RAPGEF3 and PIK3R6; form a signaling complex that regulates phosphatidylinositol 3-kinase gamma in angiogenesis. Interacts with ABHD15; this interaction regulates PDE3B's stability and expression and, thereby, impacts the antilipolytic action of insulin. Mg(2+) serves as cofactor. Requires Mn(2+) as cofactor. Phosphorylation at Ser-279 mediates insulin-induced activation of PDE3B. In terms of tissue distribution, abundant in adipose tissues.

It localises to the membrane. It carries out the reaction a nucleoside 3',5'-cyclic phosphate + H2O = a nucleoside 5'-phosphate + H(+). The catalysed reaction is 3',5'-cyclic AMP + H2O = AMP + H(+). It catalyses the reaction 3',5'-cyclic GMP + H2O = GMP + H(+). Inhibited by cGMP. Functionally, cyclic nucleotide phosphodiesterase with a dual-specificity for the second messengers cAMP and cGMP, which are key regulators of many important physiological processes. Regulates angiogenesis by inhibiting the cAMP-dependent guanine nucleotide exchange factor RAPGEF3 and downstream phosphatidylinositol 3-kinase gamma-mediated signaling. Controls cardiac contractility by reducing cAMP concentration in cardiocytes. The sequence is that of cGMP-inhibited 3',5'-cyclic phosphodiesterase 3B from Rattus norvegicus (Rat).